We begin with the raw amino-acid sequence, 556 residues long: Vetispiradiene synthase 1 (556 aa).

The Mg(2+) site is built by Asp-309, Asp-313, Asp-452, Thr-456, and Glu-460. The short motif at 309–313 (DDTFD) is the DDXXD motif element.

The protein belongs to the terpene synthase family. Tpsa subfamily. The cofactor is Mg(2+).

It localises to the cytoplasm. The catalysed reaction is (2E,6E)-farnesyl diphosphate = (-)-vetispiradiene + diphosphate. The protein operates within secondary metabolite biosynthesis; terpenoid biosynthesis. Functionally, sesquiterpene synthase that catalyzes the formation of vetispiradiene from trans,trans-farnesyl diphosphate. The initial internal cyclization produces the monocyclic intermediate germacrene A. This Solanum tuberosum (Potato) protein is Vetispiradiene synthase 1 (PVS1).